Here is an 89-residue protein sequence, read N- to C-terminus: Cytochrome c oxidase subunit 7A, mitochondrial (89 aa).

The N-terminal 31 residues, 1-31 (MMNLSRAVVRSFATTAGRRSAAVPKDQIEKG), are a transit peptide targeting the mitochondrion. Over 32–58 (YFEIRKVQEHFQKKDGKPVFLKGSVVD) the chain is Mitochondrial matrix. Residues 59–81 (NVLYRVTVALALVGIGGMGKLFY) form a helical membrane-spanning segment. Topologically, residues 82–89 (ELSVPKKE) are mitochondrial intermembrane.

It belongs to the cytochrome c oxidase VIIa family. As to quaternary structure, component of the cytochrome c oxidase (complex IV, CIV), a multisubunit enzyme composed of a catalytic core of 3 subunits and several supernumerary subunits. The complex exists as a monomer or a dimer and forms supercomplexes (SCs) in the inner mitochondrial membrane with ubiquinol-cytochrome c oxidoreductase (cytochrome b-c1 complex, complex III, CIII).

The protein localises to the mitochondrion inner membrane. It participates in energy metabolism; oxidative phosphorylation. Its function is as follows. Component of the cytochrome c oxidase, the last enzyme in the mitochondrial electron transport chain which drives oxidative phosphorylation. The respiratory chain contains 3 multisubunit complexes succinate dehydrogenase (complex II, CII), ubiquinol-cytochrome c oxidoreductase (cytochrome b-c1 complex, complex III, CIII) and cytochrome c oxidase (complex IV, CIV), that cooperate to transfer electrons derived from NADH and succinate to molecular oxygen, creating an electrochemical gradient over the inner membrane that drives transmembrane transport and the ATP synthase. Cytochrome c oxidase is the component of the respiratory chain that catalyzes the reduction of oxygen to water. Electrons originating from reduced cytochrome c in the intermembrane space (IMS) are transferred via the dinuclear copper A center (CU(A)) of subunit 2 and heme A of subunit 1 to the active site in subunit 1, a binuclear center (BNC) formed by heme A3 and copper B (CU(B)). The BNC reduces molecular oxygen to 2 water molecules using 4 electrons from cytochrome c in the IMS and 4 protons from the mitochondrial matrix. This is Cytochrome c oxidase subunit 7A, mitochondrial from Drosophila melanogaster (Fruit fly).